A 265-amino-acid chain; its full sequence is tRNA (guanine-N(1)-)-methyltransferase (265 aa).

S-adenosyl-L-methionine-binding positions include G119 and 139-144; that span reads IGDYVL.

It belongs to the RNA methyltransferase TrmD family. As to quaternary structure, homodimer.

The protein resides in the cytoplasm. It carries out the reaction guanosine(37) in tRNA + S-adenosyl-L-methionine = N(1)-methylguanosine(37) in tRNA + S-adenosyl-L-homocysteine + H(+). Its function is as follows. Specifically methylates guanosine-37 in various tRNAs. The polypeptide is tRNA (guanine-N(1)-)-methyltransferase (Alcanivorax borkumensis (strain ATCC 700651 / DSM 11573 / NCIMB 13689 / SK2)).